The primary structure comprises 108 residues: Large ribosomal subunit protein uL23 (108 aa).

Belongs to the universal ribosomal protein uL23 family. In terms of assembly, part of the 50S ribosomal subunit. Contacts protein L29, and trigger factor when it is bound to the ribosome.

One of the early assembly proteins it binds 23S rRNA. One of the proteins that surrounds the polypeptide exit tunnel on the outside of the ribosome. Forms the main docking site for trigger factor binding to the ribosome. This is Large ribosomal subunit protein uL23 from Mycoplasmoides gallisepticum (strain R(low / passage 15 / clone 2)) (Mycoplasma gallisepticum).